The following is a 213-amino-acid chain: MIISKPMETSRMSANIVKILNKHFAKYIRNECFDIIQIKNICNLYNNSTGKNSSITLSEINFSSPEFTKYNHTVNKNHLDILKTQEFVRKHSFFIKVMYACLKLNLEIFFLEEEFITLKNNYQIIKTLEATKKQLIHEHINILKSQYKDVSKKISDNYDDYLNDYLIKIKIIDKIHALINGLIKSNILESQDNLLSLILPYFFTYPEFIEEYN.

This is an uncharacterized protein from Acanthamoeba polyphaga mimivirus (APMV).